A 97-amino-acid chain; its full sequence is Aspartyl/glutamyl-tRNA(Asn/Gln) amidotransferase subunit C (97 aa).

It belongs to the GatC family. Heterotrimer of A, B and C subunits.

The catalysed reaction is L-glutamyl-tRNA(Gln) + L-glutamine + ATP + H2O = L-glutaminyl-tRNA(Gln) + L-glutamate + ADP + phosphate + H(+). It catalyses the reaction L-aspartyl-tRNA(Asn) + L-glutamine + ATP + H2O = L-asparaginyl-tRNA(Asn) + L-glutamate + ADP + phosphate + 2 H(+). Allows the formation of correctly charged Asn-tRNA(Asn) or Gln-tRNA(Gln) through the transamidation of misacylated Asp-tRNA(Asn) or Glu-tRNA(Gln) in organisms which lack either or both of asparaginyl-tRNA or glutaminyl-tRNA synthetases. The reaction takes place in the presence of glutamine and ATP through an activated phospho-Asp-tRNA(Asn) or phospho-Glu-tRNA(Gln). The protein is Aspartyl/glutamyl-tRNA(Asn/Gln) amidotransferase subunit C of Listeria welshimeri serovar 6b (strain ATCC 35897 / DSM 20650 / CCUG 15529 / CIP 8149 / NCTC 11857 / SLCC 5334 / V8).